The following is a 276-amino-acid chain: Thymidylate synthase (276 aa).

Position 26 (Arg26) interacts with dUMP. His56 serves as a coordination point for (6R)-5,10-methylene-5,6,7,8-tetrahydrofolate. 131-132 (RR) is a dUMP binding site. Catalysis depends on Cys151, which acts as the Nucleophile. DUMP contacts are provided by residues 178–181 (RSAD), Asn189, and 219–221 (HIY). Residue Asp181 participates in (6R)-5,10-methylene-5,6,7,8-tetrahydrofolate binding. Ala275 lines the (6R)-5,10-methylene-5,6,7,8-tetrahydrofolate pocket.

It belongs to the thymidylate synthase family. Bacterial-type ThyA subfamily. Homodimer.

The protein resides in the cytoplasm. It catalyses the reaction dUMP + (6R)-5,10-methylene-5,6,7,8-tetrahydrofolate = 7,8-dihydrofolate + dTMP. The protein operates within pyrimidine metabolism; dTTP biosynthesis. Functionally, catalyzes the reductive methylation of 2'-deoxyuridine-5'-monophosphate (dUMP) to 2'-deoxythymidine-5'-monophosphate (dTMP) while utilizing 5,10-methylenetetrahydrofolate (mTHF) as the methyl donor and reductant in the reaction, yielding dihydrofolate (DHF) as a by-product. This enzymatic reaction provides an intracellular de novo source of dTMP, an essential precursor for DNA biosynthesis. The chain is Thymidylate synthase from Polaromonas naphthalenivorans (strain CJ2).